The following is a 504-amino-acid chain: uncharacterized protein (504 aa).

This is an uncharacterized protein from Klebsiella pneumoniae.